The following is a 303-amino-acid chain: Succinate--CoA ligase [ADP-forming] subunit alpha (303 aa).

CoA contacts are provided by residues 20–23 (TGSE), lysine 46, and 108–110 (ITE). Residue tyrosine 173 participates in substrate binding. Histidine 259 serves as the catalytic Tele-phosphohistidine intermediate.

It belongs to the succinate/malate CoA ligase alpha subunit family. As to quaternary structure, heterotetramer of two alpha and two beta subunits.

It catalyses the reaction succinate + ATP + CoA = succinyl-CoA + ADP + phosphate. It carries out the reaction GTP + succinate + CoA = succinyl-CoA + GDP + phosphate. It participates in carbohydrate metabolism; tricarboxylic acid cycle; succinate from succinyl-CoA (ligase route): step 1/1. Functionally, succinyl-CoA synthetase functions in the citric acid cycle (TCA), coupling the hydrolysis of succinyl-CoA to the synthesis of either ATP or GTP and thus represents the only step of substrate-level phosphorylation in the TCA. The alpha subunit of the enzyme binds the substrates coenzyme A and phosphate, while succinate binding and nucleotide specificity is provided by the beta subunit. This chain is Succinate--CoA ligase [ADP-forming] subunit alpha, found in Mycobacterium bovis (strain ATCC BAA-935 / AF2122/97).